The chain runs to 87 residues: Apoptosis inducing factor BLCAP B (87 aa).

2 helical membrane passes run 19–39 and 43–63; these read PALW…FLLE and CTIC…SCWG.

It belongs to the BLCAP family.

The protein resides in the cytoplasm. It localises to the nucleus. It is found in the membrane. Its function is as follows. Acts as a tumor suppressor; induces growth arrest at G(1)/S checkpoint and apoptosis via RB1-dependent and p53/TP53- and NF-kappa-B-independent mechanisms. Modulates expression of genes involved in the regulation of proliferation, cell cycle and apoptosis. This chain is Apoptosis inducing factor BLCAP B (blcap-b), found in Xenopus laevis (African clawed frog).